A 220-amino-acid chain; its full sequence is Gene 32 protein (220 aa).

A disordered region spans residues 184 to 205 (NSAGGNGNAPGGGGAGAQVSAQ). A compositionally biased stretch (gly residues) spans 187–199 (GGNGNAPGGGGAG).

The sequence is that of Gene 32 protein (32) from Mycobacterium (Mycobacteriophage L5).